A 320-amino-acid polypeptide reads, in one-letter code: 4-hydroxyproline 2-epimerase (320 aa).

The Proton acceptor role is filled by C98. Substrate contacts are provided by residues 99–100, H218, and D242; that span reads GH. The Proton donor role is filled by C246. 247-248 is a binding site for substrate; it reads GT.

Belongs to the proline racemase family.

The catalysed reaction is trans-4-hydroxy-L-proline = cis-4-hydroxy-D-proline. Its function is as follows. Catalyzes the epimerization of trans-4-hydroxy-L-proline (t4LHyp) to cis-4-hydroxy-D-proline (c4DHyp). Is likely involved in a degradation pathway that converts t4LHyp to alpha-ketoglutarate. Displays no proline racemase activity. The protein is 4-hydroxyproline 2-epimerase of Burkholderia pseudomallei (strain 1710b).